The primary structure comprises 159 residues: Transcriptional repressor NrdR (159 aa).

A zinc finger spans residues 3-34 (CPKCGYNKSSVVDSRQAEEGTTIRRRRECEKC). The ATP-cone domain occupies 49–139 (LLVIKKDGTR…VYKSFKDVDE (91 aa)).

The protein belongs to the NrdR family. Requires Zn(2+) as cofactor.

Functionally, negatively regulates transcription of bacterial ribonucleotide reductase nrd genes and operons by binding to NrdR-boxes. This is Transcriptional repressor NrdR from Streptococcus agalactiae serotype Ia (strain ATCC 27591 / A909 / CDC SS700).